The sequence spans 238 residues: Pyridoxine 5'-phosphate synthase (238 aa).

N9 serves as a coordination point for 3-amino-2-oxopropyl phosphate. Residue 11 to 12 (DH) coordinates 1-deoxy-D-xylulose 5-phosphate. 3-amino-2-oxopropyl phosphate is bound at residue R20. The active-site Proton acceptor is H45. The 1-deoxy-D-xylulose 5-phosphate site is built by R47 and H52. E72 acts as the Proton acceptor in catalysis. T102 contacts 1-deoxy-D-xylulose 5-phosphate. The active-site Proton donor is the H189. Residues G190 and 211 to 212 (GH) each bind 3-amino-2-oxopropyl phosphate.

It belongs to the PNP synthase family. Homooctamer; tetramer of dimers.

It is found in the cytoplasm. It carries out the reaction 3-amino-2-oxopropyl phosphate + 1-deoxy-D-xylulose 5-phosphate = pyridoxine 5'-phosphate + phosphate + 2 H2O + H(+). It functions in the pathway cofactor biosynthesis; pyridoxine 5'-phosphate biosynthesis; pyridoxine 5'-phosphate from D-erythrose 4-phosphate: step 5/5. Functionally, catalyzes the complicated ring closure reaction between the two acyclic compounds 1-deoxy-D-xylulose-5-phosphate (DXP) and 3-amino-2-oxopropyl phosphate (1-amino-acetone-3-phosphate or AAP) to form pyridoxine 5'-phosphate (PNP) and inorganic phosphate. In Ehrlichia canis (strain Jake), this protein is Pyridoxine 5'-phosphate synthase.